Consider the following 397-residue polypeptide: P-selectin glycoprotein ligand 1 (397 aa).

Positions 1–17 are cleaved as a signal peptide; it reads MSPSFLVLLTILGPGNS. The propeptide occupies 18–41; the sequence is LQLQDPWGHETKEAPGPVHLRERR. At 18-307 the chain is on the extracellular side; that stretch reads LQLQDPWGHE…SSDLIPVKQC (290 aa). At Y54 the chain carries Sulfotyrosine. T58 carries an O-linked (GalNAc...) threonine glycan. N66 is a glycosylation site (N-linked (GlcNAc...) asparagine). A disordered region spans residues 89 to 261; sequence TSAGTSERAT…TMETASTESN (173 aa). Over residues 120–198 the composition is skewed to polar residues; it reads STDSATQWSL…PMEAETSQPA (79 aa). Tandem repeats lie at residues 126-135, 136-145, 146-155, 156-165, 166-175, 176-185, 186-195, 196-205, 206-215, and 216-225. Residues 126–225 form a 10 X 10 AA tandem repeats region; the sequence is QWSLTSVETV…KPAPTEAETT (100 aa). Residues 236–261 are compositionally biased toward polar residues; the sequence is LFTTSAATEVPSTEPTTMETASTESN. A glycan (N-linked (GlcNAc...) asparagine) is linked at N261. A helical membrane pass occupies residues 308–328; that stretch reads LLIILILASLATIFLVCTVVL. The Cytoplasmic portion of the chain corresponds to 329-397; that stretch reads AVRLSRKTHM…DDLTLHSFLP (69 aa). Residues 364–390 form a disordered region; the sequence is PVTANGGLPKVQDLKTEPSGDRDGDDL. A compositionally biased stretch (basic and acidic residues) spans 375 to 390; that stretch reads QDLKTEPSGDRDGDDL. At T391 the chain carries Phosphothreonine. S394 is subject to Phosphoserine.

As to quaternary structure, homodimer; disulfide-linked. Interacts with P- and E-selectins, through their lectin/EGF domains. Interaction with P-selectin requires sialyl Lewis X glycan modification and tyrosine sulfation, probably on Tyr-54, for high affinity binding. Dimerization appears not to be required for P-selectin/SELP binding. Interacts with SNX20. Interacts with MSN and SYK; mediates SYK activation downstream of SELPLG. Interacts with HAVCR1. Post-translationally, displays complex, core-2, sialylated and fucosylated O-linked oligosaccharides, at least some of which appear to contain poly-N-acetyllactosamine with varying degrees of substitution. Mainly disialylated or neutral forms of the core-2 tetrasaccharide, Galbeta1--&gt;4GlcNAcbeta1--&gt;6(Galbeta1--&gt;3)GalNAcOH. The GlcN:GalN ratio is approximately 2:1 and the Man:Fuc ratio 3:5. Contains about 14% fucose with alpha-1,3 linkage present in two forms: One species is a disialylated, monofucosylated glycan, and the other, a monosialylated, trifucosylated glycan with a polylactosamine backbone. The fucosylated forms carry the Lewis antigen and are important for interaction with selectins and for functioning. No sulfated O-glycans. Some N-glycosylation. Highly expressed in blood, bone marrow, brain, adipose tissue, spleen, and thymus. Also expressed in heart, kidney, liver, muscle, ovary, and stomach.

The protein localises to the cell membrane. Functionally, a SLe(x)-type proteoglycan, which through high affinity, calcium-dependent interactions with E- and P-selectins, mediates rapid rolling of leukocytes over vascular surfaces during the initial steps in inflammation. Critical for the initial leukocyte capture. The chain is P-selectin glycoprotein ligand 1 (Selplg) from Mus musculus (Mouse).